The primary structure comprises 481 residues: tRNA-2-methylthio-N(6)-dimethylallyladenosine synthase (481 aa).

The MTTase N-terminal domain occupies lysine 24–glutamate 140. Residues cysteine 33, cysteine 69, cysteine 103, cysteine 178, cysteine 182, and cysteine 185 each contribute to the [4Fe-4S] cluster site. Positions methionine 164–arginine 411 constitute a Radical SAM core domain. The 64-residue stretch at glutamate 413 to glycine 476 folds into the TRAM domain.

The protein belongs to the methylthiotransferase family. MiaB subfamily. Monomer. It depends on [4Fe-4S] cluster as a cofactor.

It localises to the cytoplasm. It catalyses the reaction N(6)-dimethylallyladenosine(37) in tRNA + (sulfur carrier)-SH + AH2 + 2 S-adenosyl-L-methionine = 2-methylsulfanyl-N(6)-dimethylallyladenosine(37) in tRNA + (sulfur carrier)-H + 5'-deoxyadenosine + L-methionine + A + S-adenosyl-L-homocysteine + 2 H(+). Functionally, catalyzes the methylthiolation of N6-(dimethylallyl)adenosine (i(6)A), leading to the formation of 2-methylthio-N6-(dimethylallyl)adenosine (ms(2)i(6)A) at position 37 in tRNAs that read codons beginning with uridine. In Flavobacterium johnsoniae (strain ATCC 17061 / DSM 2064 / JCM 8514 / BCRC 14874 / CCUG 350202 / NBRC 14942 / NCIMB 11054 / UW101) (Cytophaga johnsonae), this protein is tRNA-2-methylthio-N(6)-dimethylallyladenosine synthase.